The primary structure comprises 101 residues: RNA-3 uncharacterized 11.6 kDa protein (101 aa).

In Beet necrotic yellow vein mosaic virus (isolate Yugoslavia/G1) (BNYVV), this protein is RNA-3 uncharacterized 11.6 kDa protein.